The primary structure comprises 632 residues: tRNA uridine 5-carboxymethylaminomethyl modification enzyme MnmG (632 aa).

15-20 is an FAD binding site; that stretch reads GAGHAG. Positions 205–231 are disordered; sequence PRVDGNTIDYSKTQEEPGDKEPRHFSY. Basic and acidic residues predominate over residues 216–228; that stretch reads KTQEEPGDKEPRH. Position 276-290 (276-290) interacts with NAD(+); that stretch reads GPRYCPSIEDKVVRF.

It belongs to the MnmG family. Homodimer. Heterotetramer of two MnmE and two MnmG subunits. FAD serves as cofactor.

It is found in the cytoplasm. NAD-binding protein involved in the addition of a carboxymethylaminomethyl (cmnm) group at the wobble position (U34) of certain tRNAs, forming tRNA-cmnm(5)s(2)U34. In Lactobacillus johnsonii (strain CNCM I-12250 / La1 / NCC 533), this protein is tRNA uridine 5-carboxymethylaminomethyl modification enzyme MnmG.